A 473-amino-acid chain; its full sequence is Ribosomal RNA small subunit methyltransferase F (473 aa).

S-adenosyl-L-methionine-binding positions include 124–130 (ASAPGSK), Glu148, Asp175, and Asp193. Cys246 acts as the Nucleophile in catalysis.

The protein belongs to the class I-like SAM-binding methyltransferase superfamily. RsmB/NOP family.

The protein resides in the cytoplasm. It carries out the reaction cytidine(1407) in 16S rRNA + S-adenosyl-L-methionine = 5-methylcytidine(1407) in 16S rRNA + S-adenosyl-L-homocysteine + H(+). Its function is as follows. Specifically methylates the cytosine at position 1407 (m5C1407) of 16S rRNA. The polypeptide is Ribosomal RNA small subunit methyltransferase F (Aliivibrio fischeri (strain ATCC 700601 / ES114) (Vibrio fischeri)).